The following is a 91-amino-acid chain: UPF0250 protein NGO_0791 (91 aa).

It belongs to the UPF0250 family.

This chain is UPF0250 protein NGO_0791, found in Neisseria gonorrhoeae (strain ATCC 700825 / FA 1090).